A 163-amino-acid polypeptide reads, in one-letter code: Phosphopantetheine adenylyltransferase (163 aa).

S9 is a binding site for substrate. Residues 9-10 and H17 each bind ATP; that span reads SF. 3 residues coordinate substrate: K41, T73, and R87. Residues 88 to 90, E98, and 123 to 129 each bind ATP; these read GLR and YAYFSSS.

It belongs to the bacterial CoaD family. As to quaternary structure, homohexamer. Requires Mg(2+) as cofactor.

It localises to the cytoplasm. The catalysed reaction is (R)-4'-phosphopantetheine + ATP + H(+) = 3'-dephospho-CoA + diphosphate. The protein operates within cofactor biosynthesis; coenzyme A biosynthesis; CoA from (R)-pantothenate: step 4/5. Reversibly transfers an adenylyl group from ATP to 4'-phosphopantetheine, yielding dephospho-CoA (dPCoA) and pyrophosphate. The polypeptide is Phosphopantetheine adenylyltransferase (Lactiplantibacillus plantarum (strain ATCC BAA-793 / NCIMB 8826 / WCFS1) (Lactobacillus plantarum)).